A 968-amino-acid polypeptide reads, in one-letter code: Protein translocase subunit SecA (968 aa).

Residues glutamine 86, 104-108 (GEGKT), and aspartate 494 contribute to the ATP site. Residues 835–968 (PAESAEESTD…RAAKAAKKRR (134 aa)) form a disordered region. Composition is skewed to low complexity over residues 883 to 892 (ARVATRPAAE) and 910 to 923 (SAPS…FSEG). Over residues 956-968 (ARRRAAKAAKKRR) the composition is skewed to basic residues.

It belongs to the SecA family. Monomer and homodimer. Part of the essential Sec protein translocation apparatus which comprises SecA, SecYEG and auxiliary proteins SecDF. Other proteins may also be involved.

The protein localises to the cell membrane. It is found in the cytoplasm. The enzyme catalyses ATP + H2O + cellular proteinSide 1 = ADP + phosphate + cellular proteinSide 2.. Functionally, part of the Sec protein translocase complex. Interacts with the SecYEG preprotein conducting channel. Has a central role in coupling the hydrolysis of ATP to the transfer of proteins into and across the cell membrane, serving as an ATP-driven molecular motor driving the stepwise translocation of polypeptide chains across the membrane. The sequence is that of Protein translocase subunit SecA from Beutenbergia cavernae (strain ATCC BAA-8 / DSM 12333 / CCUG 43141 / JCM 11478 / NBRC 16432 / NCIMB 13614 / HKI 0122).